Reading from the N-terminus, the 184-residue chain is Lipid A acyltransferase PagP (184 aa).

Positions 1 to 22 (MNIRHGIIAMSSTMLVPLAAEA) are cleaved as a signal peptide. Catalysis depends on residues His-57, Asp-100, and Ser-101.

Belongs to the lipid A palmitoyltransferase family. As to quaternary structure, homodimer.

The protein resides in the cell outer membrane. It catalyses the reaction a lipid A + a 1,2-diacyl-sn-glycero-3-phosphocholine = a hepta-acyl lipid A + a 2-acyl-sn-glycero-3-phosphocholine. The enzyme catalyses a lipid IVA + a 1,2-diacyl-sn-glycero-3-phosphocholine = a lipid IVB + a 2-acyl-sn-glycero-3-phosphocholine. It carries out the reaction a lipid IIA + a 1,2-diacyl-sn-glycero-3-phosphocholine = a lipid IIB + a 2-acyl-sn-glycero-3-phosphocholine. Its function is as follows. Transfers a fatty acid residue from the sn-1 position of a phospholipid to the N-linked hydroxyfatty acid chain on the proximal unit of lipid A or its precursors. The protein is Lipid A acyltransferase PagP of Methylobacillus flagellatus (strain ATCC 51484 / DSM 6875 / VKM B-1610 / KT).